The following is a 124-amino-acid chain: Small ribosomal subunit protein uS12 (124 aa).

Position 89 is a 3-methylthioaspartic acid (aspartate 89).

It belongs to the universal ribosomal protein uS12 family. In terms of assembly, part of the 30S ribosomal subunit. Contacts proteins S8 and S17. May interact with IF1 in the 30S initiation complex.

Functionally, with S4 and S5 plays an important role in translational accuracy. Its function is as follows. Interacts with and stabilizes bases of the 16S rRNA that are involved in tRNA selection in the A site and with the mRNA backbone. Located at the interface of the 30S and 50S subunits, it traverses the body of the 30S subunit contacting proteins on the other side and probably holding the rRNA structure together. The combined cluster of proteins S8, S12 and S17 appears to hold together the shoulder and platform of the 30S subunit. The sequence is that of Small ribosomal subunit protein uS12 from Treponema pallidum subsp. pallidum (strain SS14).